The primary structure comprises 630 residues: Chaperone protein HtpG (630 aa).

Positions 1 to 327 (MSVETYKFDA…SEDLSLNISR (327 aa)) are a; substrate-binding. The tract at residues 328-551 (ETLQHSPLID…EGSMDIRTER (224 aa)) is b. Positions 483–499 (TKTAKSSDTNNDGKDDT) are enriched in basic and acidic residues. Positions 483–504 (TKTAKSSDTNNDGKDDTSSSDD) are disordered. The interval 552–630 (FLIEQKQLSS…INFFIEKSVN (79 aa)) is c.

Belongs to the heat shock protein 90 family. In terms of assembly, homodimer.

It is found in the cytoplasm. In terms of biological role, molecular chaperone. Has ATPase activity. The protein is Chaperone protein HtpG of Orientia tsutsugamushi (strain Boryong) (Rickettsia tsutsugamushi).